Reading from the N-terminus, the 831-residue chain is Serine/threonine-protein kinase ATG1 (831 aa).

One can recognise a Protein kinase domain in the interval 21 to 321 (YSVEKEIGKG…FTDFFNNEVV (301 aa)). ATP is bound by residues 27–35 (IGKGSFAVV) and lysine 50. Aspartate 168 functions as the Proton acceptor in the catalytic mechanism. Polar residues-rich tracts occupy residues 360–382 (QQESAHIPPTQTDENTSVQTGVR) and 405–419 (NSQNPEQSYQSASQK). The interval 360–419 (QQESAHIPPTQTDENTSVQTGVRRTSGKERLATNHPPHQQIHPEDNSQNPEQSYQSASQK) is disordered.

The protein belongs to the protein kinase superfamily. Ser/Thr protein kinase family. APG1/unc-51/ULK1 subfamily. In terms of assembly, homodimer. Forms a ternary complex with ATG13 and ATG17.

The protein localises to the cytoplasm. It localises to the preautophagosomal structure membrane. It carries out the reaction L-seryl-[protein] + ATP = O-phospho-L-seryl-[protein] + ADP + H(+). The catalysed reaction is L-threonyl-[protein] + ATP = O-phospho-L-threonyl-[protein] + ADP + H(+). Its function is as follows. Serine/threonine protein kinase involved in the cytoplasm to vacuole transport (Cvt) and found to be essential in autophagy, where it is required for the formation of autophagosomes. Involved in the clearance of protein aggregates which cannot be efficiently cleared by the proteasome. Required for selective autophagic degradation of the nucleus (nucleophagy) as well as for mitophagy which contributes to regulate mitochondrial quantity and quality by eliminating the mitochondria to a basal level to fulfill cellular energy requirements and preventing excess ROS production. Also involved in endoplasmic reticulum-specific autophagic process, in selective removal of ER-associated degradation (ERAD) substrates. Plays a key role in ATG9 and ATG23 cycling through the pre-autophagosomal structure and is necessary to promote ATG18 binding to ATG9 through phosphorylation of ATG9. Catalyzes phosphorylation of ATG4, decreasing the interaction between ATG4 and ATG8 and impairing deconjugation of PE-conjugated forms of ATG8. In Kluyveromyces lactis (strain ATCC 8585 / CBS 2359 / DSM 70799 / NBRC 1267 / NRRL Y-1140 / WM37) (Yeast), this protein is Serine/threonine-protein kinase ATG1.